We begin with the raw amino-acid sequence, 443 residues long: Ribosomal protein uS12 methylthiotransferase RimO (443 aa).

The region spanning 10 to 120 (PRVGFVSLGC…VMAAVHAQCP (111 aa)) is the MTTase N-terminal domain. [4Fe-4S] cluster contacts are provided by cysteine 19, cysteine 55, cysteine 84, cysteine 152, cysteine 156, and cysteine 159. The Radical SAM core domain maps to 138-375 (LTPRHYAYLK…MALQAEISAR (238 aa)). The TRAM domain maps to 378 to 443 (ARRVGTECTV…DEHDLYGRVL (66 aa)).

The protein belongs to the methylthiotransferase family. RimO subfamily. The cofactor is [4Fe-4S] cluster.

Its subcellular location is the cytoplasm. It carries out the reaction L-aspartate(89)-[ribosomal protein uS12]-hydrogen + (sulfur carrier)-SH + AH2 + 2 S-adenosyl-L-methionine = 3-methylsulfanyl-L-aspartate(89)-[ribosomal protein uS12]-hydrogen + (sulfur carrier)-H + 5'-deoxyadenosine + L-methionine + A + S-adenosyl-L-homocysteine + 2 H(+). Its function is as follows. Catalyzes the methylthiolation of an aspartic acid residue of ribosomal protein uS12. The chain is Ribosomal protein uS12 methylthiotransferase RimO from Alkalilimnicola ehrlichii (strain ATCC BAA-1101 / DSM 17681 / MLHE-1).